The chain runs to 326 residues: Mitochondrial substrate carrier family protein R (326 aa).

Solcar repeat units follow at residues T9 to N95, K101 to I214, and V226 to Y318. A run of 6 helical transmembrane segments spans residues M12 to L32, L64 to I84, V104 to L124, G185 to Y205, V226 to A246, and L290 to L310.

Belongs to the mitochondrial carrier (TC 2.A.29) family.

It localises to the mitochondrion inner membrane. Functionally, mitochondrial solute carriers shuttle metabolites, nucleotides, and cofactors through the mitochondrial inner membrane. May be involved in the accumulation of coenzyme A in the mitochondrial matrix. The polypeptide is Mitochondrial substrate carrier family protein R (mcfR) (Dictyostelium discoideum (Social amoeba)).